A 335-amino-acid polypeptide reads, in one-letter code: Fructose-1,6-bisphosphatase class 1 (335 aa).

Residues E93, D117, L119, and D120 each coordinate Mg(2+). Residues 120 to 123 (DGSS), N213, Y244, and K274 contribute to the substrate site. E280 is a binding site for Mg(2+).

The protein belongs to the FBPase class 1 family. In terms of assembly, homotetramer. Mg(2+) is required as a cofactor.

It is found in the cytoplasm. It carries out the reaction beta-D-fructose 1,6-bisphosphate + H2O = beta-D-fructose 6-phosphate + phosphate. Its pathway is carbohydrate biosynthesis; gluconeogenesis. The protein is Fructose-1,6-bisphosphatase class 1 of Flavobacterium psychrophilum (strain ATCC 49511 / DSM 21280 / CIP 103535 / JIP02/86).